Reading from the N-terminus, the 417-residue chain is Pygopus homolog 1 (417 aa).

Basic and acidic residues predominate over residues 1 to 11 (MSAEQDKEPIA). Disordered regions lie at residues 1 to 71 (MSAE…AANP), 175 to 265 (HFRQ…MEDP), and 284 to 318 (ENSR…CTPD). Gly residues predominate over residues 18–27 (GDSGLDGLGG). Positions 35–41 (PDKKKRK) match the Nuclear localization signal motif. Polar residues-rich tracts occupy residues 180-221 (SAEN…TNHS), 240-256 (DFTQ…SSTH), and 284-305 (ENSR…QNKP). The PHD-type zinc finger occupies 338 to 396 (VYPCGICTNEVNDDQDAILCEASCQKWFHRICTGMTETAYGLLTAEASAVWGCDTCMAD). The tract at residues 339–386 (YPCGICTNEVNDDQDAILCEASCQKWFHRICTGMTETAYGLLTAEASA) is interaction with H3K4me2. Residues 371–389 (GMTETAYGLLTAEASAVWG) form an interaction with BCL9 region.

Interacts with BCL9 via The PHD-type zinc finger motiv, and thereby becomes part of the nuclear beta-catenin/TCF complex. Found in a complex with BCL9L, CDC73, CTNNB1 and PYGO1. Interacts with histone H3 mono-, di- or tri-methylated at 'Lys4' (H3K4me1, H3K4me2, H3K4me3); the interaction is enhanced by the interaction with BCL9.

The protein resides in the nucleus. Functionally, involved in signal transduction through the Wnt pathway. In Mus musculus (Mouse), this protein is Pygopus homolog 1 (Pygo1).